The following is a 206-amino-acid chain: Nucleoside triphosphate pyrophosphatase (206 aa).

Asp76 acts as the Proton acceptor in catalysis.

Belongs to the Maf family. The cofactor is a divalent metal cation.

It localises to the cytoplasm. It carries out the reaction a ribonucleoside 5'-triphosphate + H2O = a ribonucleoside 5'-phosphate + diphosphate + H(+). It catalyses the reaction a 2'-deoxyribonucleoside 5'-triphosphate + H2O = a 2'-deoxyribonucleoside 5'-phosphate + diphosphate + H(+). Its function is as follows. Nucleoside triphosphate pyrophosphatase. May have a dual role in cell division arrest and in preventing the incorporation of modified nucleotides into cellular nucleic acids. The sequence is that of Nucleoside triphosphate pyrophosphatase from Streptomyces coelicolor (strain ATCC BAA-471 / A3(2) / M145).